A 460-amino-acid polypeptide reads, in one-letter code: ATP synthase subunit beta (460 aa).

150–157 (GGAGVGKT) lines the ATP pocket.

It belongs to the ATPase alpha/beta chains family. As to quaternary structure, F-type ATPases have 2 components, CF(1) - the catalytic core - and CF(0) - the membrane proton channel. CF(1) has five subunits: alpha(3), beta(3), gamma(1), delta(1), epsilon(1). CF(0) has three main subunits: a(1), b(2) and c(9-12). The alpha and beta chains form an alternating ring which encloses part of the gamma chain. CF(1) is attached to CF(0) by a central stalk formed by the gamma and epsilon chains, while a peripheral stalk is formed by the delta and b chains.

The protein localises to the cell inner membrane. The catalysed reaction is ATP + H2O + 4 H(+)(in) = ADP + phosphate + 5 H(+)(out). In terms of biological role, produces ATP from ADP in the presence of a proton gradient across the membrane. The catalytic sites are hosted primarily by the beta subunits. This chain is ATP synthase subunit beta, found in Pectobacterium atrosepticum (strain SCRI 1043 / ATCC BAA-672) (Erwinia carotovora subsp. atroseptica).